The sequence spans 21 residues: Formate ester dehydrogenase beta chain (21 aa).

In terms of assembly, heterotrimer composed of an alpha, a beta and a gamma chain.

The protein is Formate ester dehydrogenase beta chain of Amycolatopsis methanolica.